The sequence spans 208 residues: Holliday junction branch migration complex subunit RuvA (208 aa).

The segment at 1–64 is domain I; the sequence is MIGKLKGIVD…EDMIRLYGFR (64 aa). Positions 65–143 are domain II; it reads SDAEREWFRL…AFAPVDPALV (79 aa). Residues 144 to 152 are flexible linker; that stretch reads ALTGAVEDR. The segment at 153-208 is domain III; it reads TAPQPVADAISALVNLGYPQVQASAAIAAALKGLGDGAETVEAKTLIRLGLRELAR.

This sequence belongs to the RuvA family. As to quaternary structure, homotetramer. Forms an RuvA(8)-RuvB(12)-Holliday junction (HJ) complex. HJ DNA is sandwiched between 2 RuvA tetramers; dsDNA enters through RuvA and exits via RuvB. An RuvB hexamer assembles on each DNA strand where it exits the tetramer. Each RuvB hexamer is contacted by two RuvA subunits (via domain III) on 2 adjacent RuvB subunits; this complex drives branch migration. In the full resolvosome a probable DNA-RuvA(4)-RuvB(12)-RuvC(2) complex forms which resolves the HJ.

Its subcellular location is the cytoplasm. Functionally, the RuvA-RuvB-RuvC complex processes Holliday junction (HJ) DNA during genetic recombination and DNA repair, while the RuvA-RuvB complex plays an important role in the rescue of blocked DNA replication forks via replication fork reversal (RFR). RuvA specifically binds to HJ cruciform DNA, conferring on it an open structure. The RuvB hexamer acts as an ATP-dependent pump, pulling dsDNA into and through the RuvAB complex. HJ branch migration allows RuvC to scan DNA until it finds its consensus sequence, where it cleaves and resolves the cruciform DNA. The chain is Holliday junction branch migration complex subunit RuvA from Methylorubrum populi (strain ATCC BAA-705 / NCIMB 13946 / BJ001) (Methylobacterium populi).